The following is a 455-amino-acid chain: tRNA modification GTPase MnmE (455 aa).

Arg22, Glu85, and Arg124 together coordinate (6S)-5-formyl-5,6,7,8-tetrahydrofolate. The region spanning Gly220–Leu377 is the TrmE-type G domain. Asn230 serves as a coordination point for K(+). GTP is bound by residues Asn230–Ser235, Thr249–Thr255, and Asp274–Gly277. Mg(2+) is bound at residue Ser234. Thr249, Ile251, and Thr254 together coordinate K(+). Residue Thr255 participates in Mg(2+) binding. Residue Lys455 participates in (6S)-5-formyl-5,6,7,8-tetrahydrofolate binding.

The protein belongs to the TRAFAC class TrmE-Era-EngA-EngB-Septin-like GTPase superfamily. TrmE GTPase family. In terms of assembly, homodimer. Heterotetramer of two MnmE and two MnmG subunits. K(+) serves as cofactor.

It is found in the cytoplasm. In terms of biological role, exhibits a very high intrinsic GTPase hydrolysis rate. Involved in the addition of a carboxymethylaminomethyl (cmnm) group at the wobble position (U34) of certain tRNAs, forming tRNA-cmnm(5)s(2)U34. The chain is tRNA modification GTPase MnmE from Caldicellulosiruptor saccharolyticus (strain ATCC 43494 / DSM 8903 / Tp8T 6331).